We begin with the raw amino-acid sequence, 641 residues long: Threonine--tRNA ligase (641 aa).

Residues 1–61 (MPIITLPDGT…TQNSHIQIIT (61 aa)) enclose the TGS domain. The tract at residues 242-533 (DHRKLGKKYS…LIENYSGNFP (292 aa)) is catalytic. The Zn(2+) site is built by C333, H384, and H510.

The protein belongs to the class-II aminoacyl-tRNA synthetase family. As to quaternary structure, homodimer. Requires Zn(2+) as cofactor.

The protein resides in the cytoplasm. It catalyses the reaction tRNA(Thr) + L-threonine + ATP = L-threonyl-tRNA(Thr) + AMP + diphosphate + H(+). Its function is as follows. Catalyzes the attachment of threonine to tRNA(Thr) in a two-step reaction: L-threonine is first activated by ATP to form Thr-AMP and then transferred to the acceptor end of tRNA(Thr). Also edits incorrectly charged L-seryl-tRNA(Thr). The protein is Threonine--tRNA ligase of Prochlorococcus marinus (strain NATL2A).